Consider the following 428-residue polypeptide: MRVQKPKGTVDILPEQSGSWQKVEETARNFFNRANYREIRTPSFENYEIFSRSSGDSSEIVEKQMYDFNDKGGRHIALRPEGTAGVVRAYVEDKMYAPEVVKPFNVFYMESTFRYERPQAGRQREFHQIGVESFGSSNPLADVQTIMMGHDLLGELGVKNYQLHINTLGNEQVRKGYHDALVNYFTPVKDELSEDSQRRLRDNPLRILDSKDDRDKKFLPDAPKIRDFLDDNSKANFESILKMLDQLGIDYVIDDDLVRGLDYYTGVIFEFMVEDKSLWESATTILGGGRYDHLVEEFNGPETPAVGFGIGEERLMLVLEKQNPELFKNEGIDFFITNIGEGTAQKAIEIARSLRKQGFEADFDVNQKKLKGQFKKADREGAKYVITLGEKELANGVLNIKRLADGKTIDLSLEDINDMNKVMKELKD.

The protein belongs to the class-II aminoacyl-tRNA synthetase family. As to quaternary structure, homodimer.

The protein resides in the cytoplasm. The catalysed reaction is tRNA(His) + L-histidine + ATP = L-histidyl-tRNA(His) + AMP + diphosphate + H(+). This is Histidine--tRNA ligase from Lactobacillus helveticus (strain DPC 4571).